Reading from the N-terminus, the 275-residue chain is Dermonecrotic toxin LruSicTox-alphaIV1 (275 aa).

His-5 is an active-site residue. Mg(2+)-binding residues include Glu-25 and Asp-27. Catalysis depends on His-41, which acts as the Nucleophile. 2 cysteine pairs are disulfide-bonded: Cys-45–Cys-51 and Cys-47–Cys-192. Mg(2+) is bound at residue Asp-85.

Belongs to the arthropod phospholipase D family. Class II subfamily. Mg(2+) serves as cofactor. In terms of tissue distribution, expressed by the venom gland.

Its subcellular location is the secreted. It carries out the reaction an N-(acyl)-sphingosylphosphocholine = an N-(acyl)-sphingosyl-1,3-cyclic phosphate + choline. The enzyme catalyses an N-(acyl)-sphingosylphosphoethanolamine = an N-(acyl)-sphingosyl-1,3-cyclic phosphate + ethanolamine. The catalysed reaction is a 1-acyl-sn-glycero-3-phosphocholine = a 1-acyl-sn-glycero-2,3-cyclic phosphate + choline. It catalyses the reaction a 1-acyl-sn-glycero-3-phosphoethanolamine = a 1-acyl-sn-glycero-2,3-cyclic phosphate + ethanolamine. In terms of biological role, dermonecrotic toxins cleave the phosphodiester linkage between the phosphate and headgroup of certain phospholipids (sphingolipid and lysolipid substrates), forming an alcohol (often choline) and a cyclic phosphate. This toxin acts on sphingomyelin (SM). It may also act on ceramide phosphoethanolamine (CPE), lysophosphatidylcholine (LPC) and lysophosphatidylethanolamine (LPE), but not on lysophosphatidylserine (LPS), and lysophosphatidylglycerol (LPG). It acts by transphosphatidylation, releasing exclusively cyclic phosphate products as second products. Induces dermonecrosis, hemolysis, increased vascular permeability, edema, inflammatory response, and platelet aggregation. The polypeptide is Dermonecrotic toxin LruSicTox-alphaIV1 (Loxosceles rufescens (Mediterranean recluse spider)).